A 308-amino-acid chain; its full sequence is 1D-myo-inositol 2-acetamido-2-deoxy-alpha-D-glucopyranoside deacetylase (308 aa).

Residues His13, Asp16, and His147 each contribute to the Zn(2+) site.

It belongs to the MshB deacetylase family. Zn(2+) serves as cofactor.

It catalyses the reaction 1D-myo-inositol 2-acetamido-2-deoxy-alpha-D-glucopyranoside + H2O = 1D-myo-inositol 2-amino-2-deoxy-alpha-D-glucopyranoside + acetate. Catalyzes the deacetylation of 1D-myo-inositol 2-acetamido-2-deoxy-alpha-D-glucopyranoside (GlcNAc-Ins) in the mycothiol biosynthesis pathway. This Mycobacterium leprae (strain Br4923) protein is 1D-myo-inositol 2-acetamido-2-deoxy-alpha-D-glucopyranoside deacetylase.